The chain runs to 1184 residues: Calcium-activated potassium channel subunit alpha-1a (1184 aa).

The Extracellular portion of the chain corresponds to 1 to 39 (MSNNINFNKNPDSSVSISKMDVIIPFTPDVPCDNNGQRM). A helical transmembrane segment spans residues 40-60 (WWAFLASSMVTFFGGLFIILL). Topologically, residues 61–132 (WRTLKYLWTV…MISAQTLTGR (72 aa)) are cytoplasmic. S-palmitoyl cysteine attachment occurs at residues cysteine 71, cysteine 72, and cysteine 74. The chain crosses the membrane as a helical span at residues 133–153 (VLVVLVFALSIGALGIYFIDS). At 154 to 168 (SDPIESCQNFYKDFT) the chain is on the extracellular side. The helical transmembrane segment at 169 to 189 (LQIDMAFNVFFLLYFGLRFIA) threads the bilayer. The Cytoplasmic portion of the chain corresponds to 190–193 (ANDK). The chain crosses the membrane as a helical span at residues 194 to 214 (LWFWLEVNSVVDFFTVPPVFV). The Extracellular segment spans residues 215–254 (SVYLNRSWLGLRFLRALRLIQFSEILQFLNILKTSNSIKL). Residues 255–275 (VNLCSIFISTWLTAAGFIHLV) traverse the membrane as a helical segment. Residues 276 to 289 (ENSGDPWENFQNSQ) lie on the Cytoplasmic side of the membrane. Residues 290 to 310 (PLSYWECVYLLMVTMSTVGYG) form a helical membrane-spanning segment. Residues 311 to 321 (DVYARTTLGRL) lie on the Extracellular side of the membrane. A helical membrane pass occupies residues 322–342 (FMVFFILGGLAMFASYVPEII). The Cytoplasmic segment spans residues 343-1184 (ELIGNRKKYG…PPIREVEDEC (842 aa)). One can recognise an RCK N-terminal 1 domain in the interval 361-503 (RKHIVVCGHI…WNWKEGDDAI (143 aa)). Residues glutamate 393, glutamine 416, and glutamate 418 each coordinate Mg(2+). Position 468 (asparagine 468) interacts with Ca(2+). Residues 655–677 (EHPSTLSPKKKQRNGGMRNSPNC) form a disordered region. At threonine 659 the chain carries Phosphothreonine. Phosphoserine is present on residues serine 661, serine 674, and serine 678. The RCK N-terminal 2 domain maps to 735 to 879 (SGHVVVCIFG…MDRSSPDNSP (145 aa)). The residue at position 866 (threonine 866) is a Phosphothreonine. A phosphoserine mark is found at serine 874 and serine 878. Residues glutamine 908, aspartate 911, aspartate 914, and aspartate 916 each contribute to the Ca(2+) site. The Calcium bowl signature appears at 908–916 (QFLDQDDDD). The tract at residues 1082–1143 (RASLSHSSHS…PEKRWFTDEA (62 aa)) is disordered. A compositionally biased stretch (low complexity) spans 1084-1104 (SLSHSSHSSHSSSKKSSSVHS). A compositionally biased stretch (basic and acidic residues) spans 1116 to 1125 (KAREARDKQN).

It belongs to the potassium channel family. Calcium-activated (TC 1.A.1.3) subfamily. KCa1.1/KCNMA1 sub-subfamily. In terms of assembly, homotetramer; which constitutes the calcium-activated potassium channel. Post-translationally, phosphorylated. Palmitoylated.

Its subcellular location is the cell membrane. The enzyme catalyses K(+)(in) = K(+)(out). Functionally, potassium channel activated by both membrane depolarization or increase in cytosolic Ca(2+) that mediates export of K(+). It is also activated by the concentration of cytosolic Mg(2+). Its activation dampens the excitatory events that elevate the cytosolic Ca(2+) concentration and/or depolarize the cell membrane. It therefore contributes to repolarization of the membrane potential. Involved in determining peripheral auditory sensitivity. This is Calcium-activated potassium channel subunit alpha-1a from Danio rerio (Zebrafish).